Consider the following 221-residue polypeptide: Tetraspanin-2 (221 aa).

Topologically, residues 1–13 are cytoplasmic; the sequence is MGRFRGGLRCIKY. A helical transmembrane segment spans residues 14-34; the sequence is LLLGFNLLFWLAGSAVIAFGL. The Extracellular portion of the chain corresponds to 35–54; that stretch reads WFRFGGTMKDLSSEDKSPEY. A helical membrane pass occupies residues 55-75; that stretch reads FYVGLYVLVGAGALMMTVGFF. At 76–90 the chain is on the cytoplasmic side; the sequence is GCCGAMRESQCVLGS. The helical transmembrane segment at 91–111 threads the bilayer; the sequence is FFTCLLVIFAAEVTTGVFAFI. Over 112 to 188 the chain is Extracellular; the sequence is GKDVAIRHVQ…ETVISAKLQL (77 aa). Asparagine 139 carries N-linked (GlcNAc...) asparagine glycosylation. A helical transmembrane segment spans residues 189–209; it reads IGIVGIGIAGLTIFGMIFSMV. Residues 210 to 221 are Cytoplasmic-facing; the sequence is LCCAIRNSRDVI.

Belongs to the tetraspanin (TM4SF) family.

It localises to the membrane. May play a role in signalling in oligodendrocytes in the early stages of their terminal differentiation into myelin-forming glia and may also function in stabilizing the mature sheath. This chain is Tetraspanin-2 (Tspan2), found in Mus musculus (Mouse).